A 223-amino-acid polypeptide reads, in one-letter code: Phosphoenolpyruvate guanylyltransferase (223 aa).

Thr140, Gly156, and Ser159 together coordinate phosphoenolpyruvate.

Belongs to the CofC family.

It catalyses the reaction phosphoenolpyruvate + GTP + H(+) = enolpyruvoyl-2-diphospho-5'-guanosine + diphosphate. It participates in cofactor biosynthesis; coenzyme F420 biosynthesis. In terms of biological role, guanylyltransferase that catalyzes the activation of phosphoenolpyruvate (PEP) as enolpyruvoyl-2-diphospho-5'-guanosine, via the condensation of PEP with GTP. It is involved in the biosynthesis of coenzyme F420, a hydride carrier cofactor. The polypeptide is Phosphoenolpyruvate guanylyltransferase (Conexibacter woesei (strain DSM 14684 / CCUG 47730 / CIP 108061 / JCM 11494 / NBRC 100937 / ID131577)).